A 304-amino-acid chain; its full sequence is ATP phosphoribosyltransferase (304 aa).

It belongs to the ATP phosphoribosyltransferase family. Long subfamily. Mg(2+) serves as cofactor.

The protein localises to the cytoplasm. The enzyme catalyses 1-(5-phospho-beta-D-ribosyl)-ATP + diphosphate = 5-phospho-alpha-D-ribose 1-diphosphate + ATP. Its pathway is amino-acid biosynthesis; L-histidine biosynthesis; L-histidine from 5-phospho-alpha-D-ribose 1-diphosphate: step 1/9. With respect to regulation, feedback inhibited by histidine. Catalyzes the condensation of ATP and 5-phosphoribose 1-diphosphate to form N'-(5'-phosphoribosyl)-ATP (PR-ATP). Has a crucial role in the pathway because the rate of histidine biosynthesis seems to be controlled primarily by regulation of HisG enzymatic activity. The polypeptide is ATP phosphoribosyltransferase (Xanthomonas campestris pv. campestris (strain 8004)).